Here is a 64-residue protein sequence, read N- to C-terminus: Large ribosomal subunit protein bL35 (64 aa).

It belongs to the bacterial ribosomal protein bL35 family.

The polypeptide is Large ribosomal subunit protein bL35 (Helicobacter hepaticus (strain ATCC 51449 / 3B1)).